Here is a 350-residue protein sequence, read N- to C-terminus: Protein Wnt-8b (350 aa).

Residues 1-21 (MFLMKPVCVLLVTCVLHRSHA) form the signal peptide. C53 and C64 form a disulfide bridge. N-linked (GlcNAc...) asparagine glycosylation occurs at N102. Disulfide bonds link C103-C111, C113-C131, C179-C193, C181-C188, C255-C293, C271-C286, C290-C332, C308-C323, C310-C320, and C315-C316. S185 is lipidated: O-palmitoleoyl serine. Residue N258 is glycosylated (N-linked (GlcNAc...) asparagine).

It belongs to the Wnt family. In terms of processing, palmitoleoylation is required for efficient binding to frizzled receptors. Depalmitoleoylation leads to Wnt signaling pathway inhibition. Post-translationally, proteolytic processing by TIKI1 and TIKI2 promotes oxidation and formation of large disulfide-bond oligomers, leading to inactivation of WNT8B.

The protein resides in the secreted. It localises to the extracellular space. The protein localises to the extracellular matrix. Functionally, ligand for members of the frizzled family of seven transmembrane receptors. May play an important role in the development and differentiation of certain forebrain structures, notably the hippocampus. The protein is Protein Wnt-8b (Wnt8b) of Mus musculus (Mouse).